A 350-amino-acid chain; its full sequence is MSHQTGIQASEDVLEMFARARNGKYRLLKLDIEDEQLTVTACEKPASSWEQEYDSLILPLLEDKQPCYIMYRLDSQNAQGFEWIFIAWSPDHSHVRQKMLYAATRATVKKEFGGGHIKEELFGTVKDDISLKGYYKYLACQSSPAPLTMAEEELRQIKIKETQVDIGVDTKHQTLQGIAFPIEKAAFQALEQLREKRLNYVQLKIDIKNETIILADTTNTEVRDLPKRIPKDAARYHFFLYKHSHEGDYLDSFVFIYSMPGYTCSIRERMLYSSCKSPLLDVIENRLLMEIARKIEIDNGDELTPDFLYEEVHPKQHAHKQNFAKPKGPAGKRGIRRLIRGPAEAETAND.

ADF-H domains are found at residues 4-139 (QTGI…KYLA) and 177-313 (GIAF…EEVH). Residues 316-350 (QHAHKQNFAKPKGPAGKRGIRRLIRGPAEAETAND) form a disordered region.

This sequence belongs to the actin-binding proteins ADF family. Twinfilin subfamily. As to quaternary structure, interacts with G-actin; ADP-actin form.

The protein localises to the cytoplasm. Its subcellular location is the cytoskeleton. Its function is as follows. Actin-binding protein involved in motile and morphological processes. Inhibits actin polymerization, likely by sequestering G-actin. The protein is Twinfilin-1 (twf1) of Xenopus tropicalis (Western clawed frog).